The following is a 301-amino-acid chain: uncharacterized protein (301 aa).

Residue T47 is the Charge relay system of the active site. Y136 (proton donor) is an active-site residue. The active-site Schiff-base intermediate with substrate is K165.

Belongs to the DapA family. Homotetramer.

The protein resides in the cytoplasm. This is an uncharacterized protein from Thermofilum pendens (strain DSM 2475 / Hrk 5).